The following is a 361-amino-acid chain: Alanine racemase (361 aa).

The active-site Proton acceptor; specific for D-alanine is Lys34. Lys34 is subject to N6-(pyridoxal phosphate)lysine. Residue Arg129 coordinates substrate. Tyr254 serves as the catalytic Proton acceptor; specific for L-alanine. A substrate-binding site is contributed by Met302.

This sequence belongs to the alanine racemase family. The cofactor is pyridoxal 5'-phosphate.

The enzyme catalyses L-alanine = D-alanine. It carries out the reaction L-serine = D-serine. It functions in the pathway amino-acid biosynthesis; D-alanine biosynthesis; D-alanine from L-alanine: step 1/1. In terms of biological role, catalyzes the interconversion of L-alanine and D-alanine. Likely plays an important role in supplying D-alanine, which is an indispensable constituent in the biosynthesis of bacterial cell-wall peptidoglycan. To a lesser extent, is also able to racemize L-serine and D-serine. Does not act on other proteinogenic amino-acids. The polypeptide is Alanine racemase (alr1) (Vibrio cholerae serotype O1 (strain ATCC 39315 / El Tor Inaba N16961)).